The primary structure comprises 709 residues: MGLNLLPIEMDDIRKRLDREPNEIEWRVIDAVWSEHCSYKSSKIFLKSFSIDSPNVIMGIKDWQDAGAVDIGDGWAIVIKVESHNHPSAIDPFNGAATGVGGIIRDIISKGAKPIALMDMIRVGNLKIRKNVWLLKNIIAGIAAYGNSIGVPVVGGELSFDDTYNDNPLVDVAAIGIVRKDKIKPSIVDKAGLKLVLAGLTGIDGLGGASFASRKLSGEDEIGAVQIADPFAGKIILDITLEIADKVEAIKDLGGGGLAVAVTEMANGLGAIVDIEKIPLRVKNMNPADVIISETQERMLYAVEEKNVEEVCKAFEEYEYPCSVIGEITSEPIIKFRYFGKDLVSLPTNALLEPPKFLWPIKNVRKNVEEKNVDLPLESTIYTVLSHPDLVSKEWVYSQFDYEVNTSTVVKPGDANGAVVSLPNGKLLAIKADGNPDLCSEDAYECGKGIVAEAYRNLATVGARGMVAVDHLQFGDPKKPEVYYTFVEAIRGIGEATRFFNIPIVGGKVSFYNENSQGKPIKPTPLIVMAGLVQGKLLKNRVEDSSYVVLLGYTRKELGGSLLSKIFKVPSQAPKVRLQEDLLSSEVVIDAINEEKITFAKDISRGGLAASLFNIIVHGYGVEISTKSILSDTDNVVENLFSESSGRFVILTNEPEWIVEKSRSKGIVASIIGKVNKKTSILTIDNTDYDLKTIVNNYFNFLEEVIGNG.

His-36 is an active-site residue. Residues Tyr-39 and Lys-80 each contribute to the ATP site. Glu-82 provides a ligand contact to Mg(2+). Residues 83-86 (SHNH) and Arg-105 each bind substrate. His-84 functions as the Proton acceptor in the catalytic mechanism. Mg(2+) is bound at residue Asp-106. Gln-226 is a substrate binding site. Asp-252 is a Mg(2+) binding site. A substrate-binding site is contributed by 294–296 (ETQ). 2 residues coordinate ATP: Asp-470 and Gly-507. Ser-510 serves as a coordination point for substrate.

The protein belongs to the FGAMS family. As to quaternary structure, monomer. Part of the FGAM synthase complex composed of 1 PurL, 1 PurQ and 2 PurS subunits.

It is found in the cytoplasm. The catalysed reaction is N(2)-formyl-N(1)-(5-phospho-beta-D-ribosyl)glycinamide + L-glutamine + ATP + H2O = 2-formamido-N(1)-(5-O-phospho-beta-D-ribosyl)acetamidine + L-glutamate + ADP + phosphate + H(+). It functions in the pathway purine metabolism; IMP biosynthesis via de novo pathway; 5-amino-1-(5-phospho-D-ribosyl)imidazole from N(2)-formyl-N(1)-(5-phospho-D-ribosyl)glycinamide: step 1/2. Part of the phosphoribosylformylglycinamidine synthase complex involved in the purines biosynthetic pathway. Catalyzes the ATP-dependent conversion of formylglycinamide ribonucleotide (FGAR) and glutamine to yield formylglycinamidine ribonucleotide (FGAM) and glutamate. The FGAM synthase complex is composed of three subunits. PurQ produces an ammonia molecule by converting glutamine to glutamate. PurL transfers the ammonia molecule to FGAR to form FGAM in an ATP-dependent manner. PurS interacts with PurQ and PurL and is thought to assist in the transfer of the ammonia molecule from PurQ to PurL. This is Phosphoribosylformylglycinamidine synthase subunit PurL from Saccharolobus islandicus (strain M.16.4 / Kamchatka #3) (Sulfolobus islandicus).